The following is a 574-amino-acid chain: Amino-acid acetyltransferase, mitochondrial (574 aa).

The N-terminal 13 residues, 1–13 (MWRRIFAHELKYD), are a transit peptide targeting the mitochondrion. In terms of domain architecture, N-acetyltransferase spans 392–560 (KGAKPSSNSP…KRLREFMRSV (169 aa)).

The protein belongs to the acetyltransferase family. Interacts with the acetylglutamate kinase chain of AGR5,6.

The protein resides in the mitochondrion. The catalysed reaction is L-glutamate + acetyl-CoA = N-acetyl-L-glutamate + CoA + H(+). Its pathway is amino-acid biosynthesis; L-arginine biosynthesis; N(2)-acetyl-L-ornithine from L-glutamate: step 1/4. Feedback inhibition by L-arginine. In terms of biological role, N-acetylglutamate synthase involved in arginine biosynthesis. The protein is Amino-acid acetyltransferase, mitochondrial (ARG2) of Saccharomyces cerevisiae (strain RM11-1a) (Baker's yeast).